Consider the following 220-residue polypeptide: Vesicle-associated protein 2-1 (220 aa).

Met1 carries the N-acetylmethionine modification. The Cytoplasmic segment spans residues 1 to 196 (MTGVGENQLI…RNSGNGLSLK (196 aa)). Residue Thr2 is modified to N-acetylthreonine; in Vesicle-associated protein 2-1, N-terminally processed. One can recognise an MSP domain in the interval 9–129 (LISIQPDELK…TECKLKVSYI (121 aa)). The interval 133–154 (TTQRSSESGATNGDGQSSETIS) is disordered. A coiled-coil region spans residues 153–188 (ISTIQRLKEERDAAVKQTQQLQHELETVRRRRNQRN). A helical; Anchor for type IV membrane protein transmembrane segment spans residues 197–217 (LAAMVGLIGLIIGFILKLTLA).

It belongs to the VAMP-associated protein (VAP) (TC 9.B.17) family.

The protein resides in the endoplasmic reticulum membrane. Functionally, may play a role in vesicle trafficking. The polypeptide is Vesicle-associated protein 2-1 (PVA21) (Arabidopsis thaliana (Mouse-ear cress)).